A 663-amino-acid polypeptide reads, in one-letter code: UvrABC system protein B (663 aa).

The 241-residue stretch at 31–271 (DNIEGGEKAQ…EQSISKIQAE (241 aa)) folds into the Helicase ATP-binding domain. Position 44-51 (44-51 (GATGTGKT)) interacts with ATP. A Beta-hairpin motif is present at residues 97–120 (YYDYYQPEAYVPSSDTYIEKDSSV). Residues 435–601 (QMDDLLGEIN…TIKKDIRDLI (167 aa)) enclose the Helicase C-terminal domain. The region spanning 627–662 (QEAIKQLQKNMQEAAELLDFELAAQLRDLILELKAM) is the UVR domain.

Belongs to the UvrB family. Forms a heterotetramer with UvrA during the search for lesions. Interacts with UvrC in an incision complex.

The protein resides in the cytoplasm. Functionally, the UvrABC repair system catalyzes the recognition and processing of DNA lesions. A damage recognition complex composed of 2 UvrA and 2 UvrB subunits scans DNA for abnormalities. Upon binding of the UvrA(2)B(2) complex to a putative damaged site, the DNA wraps around one UvrB monomer. DNA wrap is dependent on ATP binding by UvrB and probably causes local melting of the DNA helix, facilitating insertion of UvrB beta-hairpin between the DNA strands. Then UvrB probes one DNA strand for the presence of a lesion. If a lesion is found the UvrA subunits dissociate and the UvrB-DNA preincision complex is formed. This complex is subsequently bound by UvrC and the second UvrB is released. If no lesion is found, the DNA wraps around the other UvrB subunit that will check the other stand for damage. This Streptococcus equi subsp. equi (strain 4047) protein is UvrABC system protein B.